The chain runs to 229 residues: Ribonuclease T (229 aa).

The region spanning 23-197 (VIIDVETAGF…YDTERTAKLF (175 aa)) is the Exonuclease domain. Mg(2+)-binding residues include D26, E28, H184, and D189. H184 functions as the Proton donor/acceptor in the catalytic mechanism.

This sequence belongs to the RNase T family. Homodimer. Mg(2+) serves as cofactor.

Its function is as follows. Trims short 3' overhangs of a variety of RNA species, leaving a one or two nucleotide 3' overhang. Responsible for the end-turnover of tRNA: specifically removes the terminal AMP residue from uncharged tRNA (tRNA-C-C-A). Also appears to be involved in tRNA biosynthesis. In Haemophilus influenzae (strain 86-028NP), this protein is Ribonuclease T.